Consider the following 646-residue polypeptide: Aquaglycerol porin AQY3 (646 aa).

The span at 1–14 (MSYESGRSSSSSES) shows a compositional bias: low complexity. Disordered regions lie at residues 1–68 (MSYE…SRNK) and 175–262 (KNMD…KKRT). Topologically, residues 1–350 (MSYESGRSSS…AKIRYHMREP (350 aa)) are cytoplasmic. A compositionally biased stretch (basic and acidic residues) spans 19-41 (TLKEEPNGKIAWEESVKKSRENN). The segment covering 190–201 (TDISRGGSTTSV) has biased composition (polar residues). A helical transmembrane segment spans residues 351-371 (FAEFLGTLVLVIFGVGGNLQA). The Extracellular portion of the chain corresponds to 372–383 (TVTKGSGGSYES). Residues 384-404 (LSFAWGFGCMLGVYVAGGISG) traverse the membrane as a helical segment. The Cytoplasmic portion of the chain corresponds to 405-427 (GHINPAVTISMAIFRKFPWKKVP). The NPA 1 motif lies at 408-410 (NPA). A helical membrane pass occupies residues 428–448 (VYIVAQIIGAYFGGAMAYGYF). Residues 449-481 (WSSITEFEGGPHIRTTATGACLFTDPKSYVTWR) lie on the Extracellular side of the membrane. A helical transmembrane segment spans residues 482–502 (NAFFDEFIGASILVGCLMALL). At 503–509 (DDSNAPP) the chain is on the cytoplasmic side. The chain crosses the membrane as a helical span at residues 510 to 530 (GNGMTALIIGFLVAAIGMALG). The Extracellular portion of the chain corresponds to 531-569 (YQTSFTINPARDLGPRIFASMIGYGPHAFHLTHWWWTWG). Positions 538-540 (NPA) match the NPA 2 motif. A helical transmembrane segment spans residues 570–590 (AWGGPIAGGIAGALIYDIFIF). At 591-646 (TGCESPVNYPDNGYIENRVGKLLHAEFHQNDGTVSDESGVNSNSNTGSKKSVPTSS) the chain is on the cytoplasmic side. The interval 621–646 (DGTVSDESGVNSNSNTGSKKSVPTSS) is disordered.

It belongs to the MIP/aquaporin (TC 1.A.8) family.

The protein resides in the cell membrane. It carries out the reaction glycerol(in) = glycerol(out). In terms of biological role, channel protein that mediates glycerol entry under ethanol stimulation. Does not seem to mediate glycerol uptake under standard conditions. In Saccharomyces cerevisiae (strain ATCC 204508 / S288c) (Baker's yeast), this protein is Aquaglycerol porin AQY3.